The primary structure comprises 189 residues: Parkinson disease protein 7 homolog (189 aa).

Ala2 bears the N-acetylalanine mark. 2 S-palmitoyl cysteine lipidation sites follow: Cys46 and Cys53. Tyr67 carries the post-translational modification Phosphotyrosine. The active-site Nucleophile is Cys106. A Cysteine sulfinic acid (-SO2H); alternate modification is found at Cys106. Cys106 carries the S-palmitoyl cysteine; alternate lipid modification. His126 is a catalytic residue. Residue Lys130 forms a Glycyl lysine isopeptide (Lys-Gly) (interchain with G-Cter in SUMO) linkage. Residue Lys148 is modified to N6-acetyllysine. An N6-succinyllysine modification is found at Lys182.

Belongs to the peptidase C56 family. In terms of assembly, homodimer. Binds EFCAB6/DJBP and PIAS2. Part of a ternary complex containing PARK7, EFCAB6/DJBP and AR. Interacts (via N-terminus) with OTUD7B. Interacts with BBS1, HIPK1, CLCF1 and MTERF. Forms a complex with PINK1 and PRKN. Interacts (via C-terminus) with NCF1; the interaction is enhanced by LPS and modulates NCF1 phosphorylation and membrane translocation. Interacts with NENF. Deglycase activity does not require glutathione as a cofactor, however, glycated glutathione constitutes a PARK7 substrate. is required as a cofactor. In terms of processing, sumoylated on Lys-130 by PIAS2 or PIAS4; which is essential for cell-growth promoting activity and transforming activity. Undergoes cleavage of a C-terminal peptide and subsequent activation of protease activity in response to oxidative stress.

The protein localises to the cell membrane. Its subcellular location is the cytoplasm. It is found in the nucleus. The protein resides in the membrane raft. It localises to the mitochondrion. The protein localises to the endoplasmic reticulum. The catalysed reaction is N(omega)-(1-hydroxy-2-oxopropyl)-L-arginyl-[protein] + H2O = lactate + L-arginyl-[protein] + H(+). It carries out the reaction N(6)-(1-hydroxy-2-oxopropyl)-L-lysyl-[protein] + H2O = lactate + L-lysyl-[protein] + H(+). The enzyme catalyses S-(1-hydroxy-2-oxopropyl)-L-cysteinyl-[protein] + H2O = lactate + L-cysteinyl-[protein] + H(+). It catalyses the reaction N(omega)-(1-hydroxy-2-oxoethyl)-L-arginyl-[protein] + H2O = L-arginyl-[protein] + glycolate + H(+). The catalysed reaction is N(6)-(1-hydroxy-2-oxoethyl)-L-lysyl-[protein] + H2O = glycolate + L-lysyl-[protein] + H(+). It carries out the reaction S-(1-hydroxy-2-oxoethyl)-L-cysteinyl-[protein] + H2O = glycolate + L-cysteinyl-[protein] + H(+). The enzyme catalyses N(2)-(1-hydroxy-2-oxopropyl)-dGTP + H2O = lactate + dGTP + H(+). It catalyses the reaction N(2)-(1-hydroxy-2-oxopropyl)-GTP + H2O = lactate + GTP + H(+). The catalysed reaction is N(2)-(1-hydroxy-2-oxopropyl)-GDP + H2O = lactate + GDP + H(+). It carries out the reaction N(2)-(1-hydroxy-2-oxopropyl)-GMP + H2O = lactate + GMP + H(+). The enzyme catalyses N(2)-(1-hydroxy-2-oxoethyl)-dGTP + H2O = dGTP + glycolate + H(+). It catalyses the reaction N(2)-(1-hydroxy-2-oxoethyl)-GTP + H2O = glycolate + GTP + H(+). The catalysed reaction is N(2)-(1-hydroxy-2-oxoethyl)-GDP + H2O = glycolate + GDP + H(+). It carries out the reaction N(2)-(1-hydroxy-2-oxoethyl)-GMP + H2O = glycolate + GMP + H(+). The enzyme catalyses an N(2)-(1-hydroxy-2-oxopropyl)-guanosine in RNA + H2O = a guanosine in RNA + lactate + H(+). It catalyses the reaction an N(2)-(1-hydroxy-2-oxopropyl)-2'-deoxyguanosine in DNA + H2O = a 2'-deoxyguanosine in DNA + lactate + H(+). The catalysed reaction is an N(2)-(1-hydroxy-2-oxoethyl)-guanosine in RNA + H2O = a guanosine in RNA + glycolate + H(+). It carries out the reaction an N(2)-(1-hydroxy-2-oxoethyl)-2'-deoxyguanosine in DNA + H2O = a 2'-deoxyguanosine in DNA + glycolate + H(+). Multifunctional protein with controversial molecular function which plays an important role in cell protection against oxidative stress and cell death acting as oxidative stress sensor and redox-sensitive chaperone and protease. It is involved in neuroprotective mechanisms like the stabilization of NFE2L2 and PINK1 proteins, male fertility as a positive regulator of androgen signaling pathway as well as cell growth and transformation through, for instance, the modulation of NF-kappa-B signaling pathway. Has been described as a protein and nucleotide deglycase that catalyzes the deglycation of the Maillard adducts formed between amino groups of proteins or nucleotides and reactive carbonyl groups of glyoxals. But this function is rebuted by other works. As a protein deglycase, repairs methylglyoxal- and glyoxal-glycated proteins, and releases repaired proteins and lactate or glycolate, respectively. Deglycates cysteine, arginine and lysine residues in proteins, and thus reactivates these proteins by reversing glycation by glyoxals. Acts on early glycation intermediates (hemithioacetals and aminocarbinols), preventing the formation of advanced glycation endproducts (AGE) that cause irreversible damage. Also functions as a nucleotide deglycase able to repair glycated guanine in the free nucleotide pool (GTP, GDP, GMP, dGTP) and in DNA and RNA. Is thus involved in a major nucleotide repair system named guanine glycation repair (GG repair), dedicated to reversing methylglyoxal and glyoxal damage via nucleotide sanitization and direct nucleic acid repair. Protects histones from adduction by methylglyoxal, controls the levels of methylglyoxal-derived argininine modifications on chromatin. Able to remove the glycations and restore histone 3, histone glycation disrupts both local and global chromatin architecture by altering histone-DNA interactions as well as histone acetylation and ubiquitination levels. Displays a very low glyoxalase activity that may reflect its deglycase activity. Eliminates hydrogen peroxide and protects cells against hydrogen peroxide-induced cell death. Required for correct mitochondrial morphology and function as well as for autophagy of dysfunctional mitochondria. Plays a role in regulating expression or stability of the mitochondrial uncoupling proteins SLC25A14 and SLC25A27 in dopaminergic neurons of the substantia nigra pars compacta and attenuates the oxidative stress induced by calcium entry into the neurons via L-type channels during pacemaking. Regulates astrocyte inflammatory responses, may modulate lipid rafts-dependent endocytosis in astrocytes and neuronal cells. In pancreatic islets, involved in the maintenance of mitochondrial reactive oxygen species (ROS) levels and glucose homeostasis in an age- and diet dependent manner. Protects pancreatic beta cells from cell death induced by inflammatory and cytotoxic setting. Binds to a number of mRNAs containing multiple copies of GG or CC motifs and partially inhibits their translation but dissociates following oxidative stress. Metal-binding protein able to bind copper as well as toxic mercury ions, enhances the cell protection mechanism against induced metal toxicity. In macrophages, interacts with the NADPH oxidase subunit NCF1 to direct NADPH oxidase-dependent ROS production, and protects against sepsis. The protein is Parkinson disease protein 7 homolog of Chlorocebus aethiops (Green monkey).